An 877-amino-acid chain; its full sequence is Alanine--tRNA ligase (877 aa).

Residues H565, H569, C667, and H671 each coordinate Zn(2+).

The protein belongs to the class-II aminoacyl-tRNA synthetase family. It depends on Zn(2+) as a cofactor.

The protein localises to the cytoplasm. It carries out the reaction tRNA(Ala) + L-alanine + ATP = L-alanyl-tRNA(Ala) + AMP + diphosphate. Catalyzes the attachment of alanine to tRNA(Ala) in a two-step reaction: alanine is first activated by ATP to form Ala-AMP and then transferred to the acceptor end of tRNA(Ala). Also edits incorrectly charged Ser-tRNA(Ala) and Gly-tRNA(Ala) via its editing domain. In Chromobacterium violaceum (strain ATCC 12472 / DSM 30191 / JCM 1249 / CCUG 213 / NBRC 12614 / NCIMB 9131 / NCTC 9757 / MK), this protein is Alanine--tRNA ligase.